A 408-amino-acid polypeptide reads, in one-letter code: Arginine biosynthesis bifunctional protein ArgJ (408 aa).

Substrate is bound by residues Thr-162, Lys-188, Thr-199, Glu-280, Asn-403, and Ser-408. Catalysis depends on Thr-199, which acts as the Nucleophile.

Belongs to the ArgJ family. In terms of assembly, heterotetramer of two alpha and two beta chains.

Its subcellular location is the cytoplasm. It carries out the reaction N(2)-acetyl-L-ornithine + L-glutamate = N-acetyl-L-glutamate + L-ornithine. It catalyses the reaction L-glutamate + acetyl-CoA = N-acetyl-L-glutamate + CoA + H(+). The protein operates within amino-acid biosynthesis; L-arginine biosynthesis; L-ornithine and N-acetyl-L-glutamate from L-glutamate and N(2)-acetyl-L-ornithine (cyclic): step 1/1. Its pathway is amino-acid biosynthesis; L-arginine biosynthesis; N(2)-acetyl-L-ornithine from L-glutamate: step 1/4. Functionally, catalyzes two activities which are involved in the cyclic version of arginine biosynthesis: the synthesis of N-acetylglutamate from glutamate and acetyl-CoA as the acetyl donor, and of ornithine by transacetylation between N(2)-acetylornithine and glutamate. The polypeptide is Arginine biosynthesis bifunctional protein ArgJ (Ruegeria pomeroyi (strain ATCC 700808 / DSM 15171 / DSS-3) (Silicibacter pomeroyi)).